The primary structure comprises 265 residues: MICOS complex subunit Mic27 (265 aa).

Residues Met-1–Lys-27 constitute a mitochondrion transit peptide. Residues Glu-28–Asp-110 lie on the Mitochondrial intermembrane side of the membrane. The chain crosses the membrane as a helical span at residues Phe-111 to Ala-129. The Mitochondrial matrix segment spans residues Arg-130 to Lys-137. The helical transmembrane segment at Ile-138 to Ala-155 threads the bilayer. At Gln-156–Ser-265 the chain is on the mitochondrial intermembrane side. Disordered stretches follow at residues Ser-187 to Lys-215 and Val-229 to Ser-265. Residue Ser-204 is modified to Phosphoserine. The segment covering Val-229–Phe-241 has biased composition (polar residues). A compositionally biased stretch (basic and acidic residues) spans Lys-246 to Ser-265.

Belongs to the apolipoprotein O/MICOS complex subunit Mic27 family. In terms of assembly, component of the mitochondrial contact site and cristae organizing system (MICOS) complex, composed of at least MICOS10/MIC10, CHCHD3/MIC19, CHCHD6/MIC25, APOOL/MIC27, IMMT/MIC60, APOO/MIC23/MIC26 and MICOS13/MIC13. This complex was also known under the names MINOS or MitOS complex. The MICOS complex associates with mitochondrial outer membrane proteins SAMM50, MTX1 and MTX2 (together described as components of the mitochondrial outer membrane sorting assembly machinery (SAM) complex) and DNAJC11, mitochondrial inner membrane protein TMEM11 and with HSPA9. The MICOS and SAM complexes together with DNAJC11 are part of a large protein complex spanning both membranes termed the mitochondrial intermembrane space bridging (MIB) complex. Interacts with MICOS10/MIC10, IMMT/MIC60 and APOO/MIC23/MIC26.

It is found in the mitochondrion inner membrane. It localises to the mitochondrion. Functionally, component of the MICOS complex, a large protein complex of the mitochondrial inner membrane that plays crucial roles in the maintenance of crista junctions, inner membrane architecture, and formation of contact sites to the outer membrane. Specifically binds to cardiolipin (in vitro) but not to the precursor lipid phosphatidylglycerol. Plays a crucial role in crista junction formation and mitochondrial function. The protein is MICOS complex subunit Mic27 (Apool) of Mus musculus (Mouse).